The chain runs to 492 residues: Probable serine/threonine-protein kinase WNK9 (492 aa).

Positions 25–282 (GRYNEVLGKG…ACELLDDHFL (258 aa)) constitute a Protein kinase domain. Residues 105-108 (TEMF) and Lys-155 each bind ATP. Catalysis depends on Asp-172, which acts as the Proton acceptor.

It belongs to the protein kinase superfamily. Ser/Thr protein kinase family. WNK subfamily.

The catalysed reaction is L-seryl-[protein] + ATP = O-phospho-L-seryl-[protein] + ADP + H(+). It carries out the reaction L-threonyl-[protein] + ATP = O-phospho-L-threonyl-[protein] + ADP + H(+). Its function is as follows. May regulate flowering time by modulating the photoperiod pathway. The protein is Probable serine/threonine-protein kinase WNK9 (WNK9) of Arabidopsis thaliana (Mouse-ear cress).